We begin with the raw amino-acid sequence, 246 residues long: MyoD family inhibitor domain-containing protein (246 aa).

The interval 1 to 71 is disordered; that stretch reads MSGAGEALAP…WGNPSDGELI (71 aa). The span at 33–43 shows a compositional bias: basic and acidic residues; sequence KCDKDNTEKDI. Residues 44-63 are compositionally biased toward polar residues; the sequence is TQATNSHFTHGEMQDQSIWG. In terms of domain architecture, MDFI spans 74 to 246; it reads QPQRLPQLQT…MECCGICFPS (173 aa). Phosphoserine occurs at positions 128, 140, and 143.

This sequence belongs to the MDFI family. As to quaternary structure, interacts with HAND1; the interaction sequesters HAND1 into the nucleolus and inhibits its activity. Interacts (via C-terminus) with ZIC2. Interacts (via C-terminus) with AXIN1, the histidine-rich region of CCNT1/cyclin-T and weakly with LEF1. Interacts with CCNT2. Interacts with GATA2. Interacts (via C-terminus) with Piezo channel composed of PIEZO1 or PIEZO2; the interaction prolongs Piezo channel inactivation. In terms of assembly, (Microbial infection) Interacts (via C-terminus) with HIV-1 Tat and Rev. Palmitoylated. As to expression, expressed in lymphatic tissues. Detected in the spleen, thymus, peripheral blood leukocytes as well as prostate, uterus and small intestine. Expressed in lymphatic endothelial cells.

It is found in the nucleus. The protein localises to the nucleolus. It localises to the cytoplasm. The protein resides in the secreted. Its function is as follows. Required to control the activity of various transcription factors through their sequestration in the cytoplasm. Retains nuclear Zic proteins ZIC1, ZIC2 and ZIC3 in the cytoplasm and inhibits their transcriptional activation. Modulates the expression from cellular promoters. Binds to the axin complex, resulting in an increase in the level of free beta-catenin. Affects axin regulation of the WNT and JNK signaling pathways. Involved in the development of lymphatic vessel valves. Required to promote lymphatic endothelial cell migration, in a process that involves down-regulation of integrin beta 1 activation and control of cell adhesion to the extracellular matrix. Regulates the activity of mechanosensitive Piezo channel. In terms of biological role, (Microbial infection) Modulates the expression from viral promoters. Down-regulates Tat-dependent transcription of the human immunodeficiency virus type 1 (HIV-1) LTR by interacting with HIV-1 Tat and Rev and impairing their nuclear import, probably by rendering the NLS domains inaccessible to importin-beta. Also stimulates activation of human T-cell leukemia virus type I (HTLV-I) LTR. This is MyoD family inhibitor domain-containing protein from Homo sapiens (Human).